Consider the following 213-residue polypeptide: Orotate phosphoribosyltransferase (213 aa).

Residue Lys26 participates in 5-phospho-alpha-D-ribose 1-diphosphate binding. 34-35 (FF) contributes to the orotate binding site. 5-phospho-alpha-D-ribose 1-diphosphate contacts are provided by residues 72 to 73 (YK), Arg99, Lys100, Lys103, His105, and 124 to 132 (DDVITAGTS). The orotate site is built by Thr128 and Arg156.

Belongs to the purine/pyrimidine phosphoribosyltransferase family. PyrE subfamily. Homodimer. Mg(2+) is required as a cofactor.

It catalyses the reaction orotidine 5'-phosphate + diphosphate = orotate + 5-phospho-alpha-D-ribose 1-diphosphate. Its pathway is pyrimidine metabolism; UMP biosynthesis via de novo pathway; UMP from orotate: step 1/2. Catalyzes the transfer of a ribosyl phosphate group from 5-phosphoribose 1-diphosphate to orotate, leading to the formation of orotidine monophosphate (OMP). This is Orotate phosphoribosyltransferase from Methylococcus capsulatus (strain ATCC 33009 / NCIMB 11132 / Bath).